A 100-amino-acid polypeptide reads, in one-letter code: Cell division protein FtsB (100 aa).

Topologically, residues Met-1–Gln-3 are cytoplasmic. The chain crosses the membrane as a helical span at residues Leu-4–Leu-21. The Periplasmic segment spans residues Gly-22–Arg-100. Positions Arg-49–Asn-73 form a coiled coil.

The protein belongs to the FtsB family. In terms of assembly, part of a complex composed of FtsB, FtsL and FtsQ.

It is found in the cell inner membrane. Essential cell division protein. May link together the upstream cell division proteins, which are predominantly cytoplasmic, with the downstream cell division proteins, which are predominantly periplasmic. In Shewanella frigidimarina (strain NCIMB 400), this protein is Cell division protein FtsB.